A 212-amino-acid chain; its full sequence is Inner membrane-spanning protein YciB (212 aa).

5 consecutive transmembrane segments (helical) span residues 49 to 69 (APVLLATVVVILATLAQVLYL), 78 to 98 (TMLWVSLGLVTVMGGATIWFH), 105 to 125 (WKPSVLYWVMSAAFLLAPIVA), 150 to 170 (LAWAAFFAGMGVLNIWVAYNF), and 178 to 198 (FKAFGGMGLMFVFMLAQGLYM).

The protein belongs to the YciB family.

The protein resides in the cell inner membrane. In terms of biological role, plays a role in cell envelope biogenesis, maintenance of cell envelope integrity and membrane homeostasis. The sequence is that of Inner membrane-spanning protein YciB from Leptothrix cholodnii (strain ATCC 51168 / LMG 8142 / SP-6) (Leptothrix discophora (strain SP-6)).